Reading from the N-terminus, the 227-residue chain is Cytochrome c oxidase subunit 2 (227 aa).

At 1–14 (MAYPLQLGFQDATS) the chain is on the mitochondrial intermembrane side. Residues 15–45 (PVMEELLHFHDHTLMIIFLISSLVLYIIMLM) form a helical membrane-spanning segment. Over 46–59 (LTTKLIHTNMMNVQ) the chain is Mitochondrial matrix. A helical membrane pass occupies residues 60–87 (EMEMIWTILPAIILILIALPSLHTLYMM). Residues 88–227 (DEINNPLLTI…YFESWSASLA (140 aa)) are Mitochondrial intermembrane-facing. Cu cation-binding residues include His-161, Cys-196, Glu-198, Cys-200, His-204, and Met-207. Position 198 (Glu-198) interacts with Mg(2+). Tyr-218 bears the Phosphotyrosine mark.

Belongs to the cytochrome c oxidase subunit 2 family. As to quaternary structure, component of the cytochrome c oxidase (complex IV, CIV), a multisubunit enzyme composed of 14 subunits. The complex is composed of a catalytic core of 3 subunits MT-CO1, MT-CO2 and MT-CO3, encoded in the mitochondrial DNA, and 11 supernumerary subunits COX4I, COX5A, COX5B, COX6A, COX6B, COX6C, COX7A, COX7B, COX7C, COX8 and NDUFA4, which are encoded in the nuclear genome. The complex exists as a monomer or a dimer and forms supercomplexes (SCs) in the inner mitochondrial membrane with NADH-ubiquinone oxidoreductase (complex I, CI) and ubiquinol-cytochrome c oxidoreductase (cytochrome b-c1 complex, complex III, CIII), resulting in different assemblies (supercomplex SCI(1)III(2)IV(1) and megacomplex MCI(2)III(2)IV(2)). Found in a complex with TMEM177, COA6, COX18, COX20, SCO1 and SCO2. Interacts with TMEM177 in a COX20-dependent manner. Interacts with COX20. Interacts with COX16. Cu cation serves as cofactor.

It is found in the mitochondrion inner membrane. It catalyses the reaction 4 Fe(II)-[cytochrome c] + O2 + 8 H(+)(in) = 4 Fe(III)-[cytochrome c] + 2 H2O + 4 H(+)(out). Functionally, component of the cytochrome c oxidase, the last enzyme in the mitochondrial electron transport chain which drives oxidative phosphorylation. The respiratory chain contains 3 multisubunit complexes succinate dehydrogenase (complex II, CII), ubiquinol-cytochrome c oxidoreductase (cytochrome b-c1 complex, complex III, CIII) and cytochrome c oxidase (complex IV, CIV), that cooperate to transfer electrons derived from NADH and succinate to molecular oxygen, creating an electrochemical gradient over the inner membrane that drives transmembrane transport and the ATP synthase. Cytochrome c oxidase is the component of the respiratory chain that catalyzes the reduction of oxygen to water. Electrons originating from reduced cytochrome c in the intermembrane space (IMS) are transferred via the dinuclear copper A center (CU(A)) of subunit 2 and heme A of subunit 1 to the active site in subunit 1, a binuclear center (BNC) formed by heme A3 and copper B (CU(B)). The BNC reduces molecular oxygen to 2 water molecules using 4 electrons from cytochrome c in the IMS and 4 protons from the mitochondrial matrix. The sequence is that of Cytochrome c oxidase subunit 2 (MT-CO2) from Elephas maximus (Indian elephant).